A 192-amino-acid chain; its full sequence is Small ribosomal subunit protein uS4B (192 aa).

Residues 83-145 (RRLDNLVYRL…SRKIQTYASN (63 aa)) enclose the S4 RNA-binding domain.

Belongs to the universal ribosomal protein uS4 family. As to quaternary structure, part of the 30S ribosomal subunit. Contacts protein S5. The interaction surface between S4 and S5 is involved in control of translational fidelity.

Functionally, one of the primary rRNA binding proteins, it binds directly to 16S rRNA where it nucleates assembly of the body of the 30S subunit. With S5 and S12 plays an important role in translational accuracy. The sequence is that of Small ribosomal subunit protein uS4B (rpsD2) from Clostridium acetobutylicum (strain ATCC 824 / DSM 792 / JCM 1419 / IAM 19013 / LMG 5710 / NBRC 13948 / NRRL B-527 / VKM B-1787 / 2291 / W).